Here is a 118-residue protein sequence, read N- to C-terminus: Large ribosomal subunit protein bL19 (118 aa).

This sequence belongs to the bacterial ribosomal protein bL19 family.

Its function is as follows. This protein is located at the 30S-50S ribosomal subunit interface and may play a role in the structure and function of the aminoacyl-tRNA binding site. In Helicobacter acinonychis (strain Sheeba), this protein is Large ribosomal subunit protein bL19.